The sequence spans 297 residues: HTH-type transcriptional regulator ArgP (297 aa).

An HTH lysR-type domain is found at 4 to 60; that stretch reads PDYRTLQALDAVIRERGFERAAQKLCITQSAVSQRIKQLENMFGQPLLVRTVPPRPT. A DNA-binding region (H-T-H motif) is located at residues 21 to 40; it reads FERAAQKLCITQSAVSQRIK.

Belongs to the LysR transcriptional regulatory family. Homodimer.

Functionally, controls the transcription of genes involved in arginine and lysine metabolism. This is HTH-type transcriptional regulator ArgP from Salmonella choleraesuis (strain SC-B67).